The chain runs to 174 residues: Large ribosomal subunit protein uL6 (174 aa).

This sequence belongs to the universal ribosomal protein uL6 family. As to quaternary structure, part of the 50S ribosomal subunit.

Functionally, this protein binds to the 23S rRNA, and is important in its secondary structure. It is located near the subunit interface in the base of the L7/L12 stalk, and near the tRNA binding site of the peptidyltransferase center. The protein is Large ribosomal subunit protein uL6 of Acidithiobacillus ferrooxidans (strain ATCC 23270 / DSM 14882 / CIP 104768 / NCIMB 8455) (Ferrobacillus ferrooxidans (strain ATCC 23270)).